The chain runs to 338 residues: Alcohol dehydrogenase (338 aa).

C38, H61, E62, C92, C95, C98, C106, and C148 together coordinate Zn(2+).

This sequence belongs to the zinc-containing alcohol dehydrogenase family. As to quaternary structure, homotetramer. Zn(2+) serves as cofactor.

It carries out the reaction a primary alcohol + NAD(+) = an aldehyde + NADH + H(+). It catalyses the reaction a secondary alcohol + NAD(+) = a ketone + NADH + H(+). The catalysed reaction is ethanol + NAD(+) = acetaldehyde + NADH + H(+). The enzyme catalyses 1-propanol + NAD(+) = propanal + NADH + H(+). It carries out the reaction butan-1-ol + NAD(+) = butanal + NADH + H(+). It catalyses the reaction propan-2-ol + NAD(+) = acetone + NADH + H(+). In terms of biological role, psychrophilic alcohol dehydrogenase that exhibits a wide range of substrate specificity, oxidizing mainly primary and secondary aliphatic alcohols, utilizing NAD(+) as a cosubstrate. In vitro, shows highest reaction rates for ethanol as a substrate and gradually decreases its reaction rates as the length and branching of the carbon chain of the alcohol substrates increase. To a lesser extent, is also able to reduce aldehydes and ketones. Do not catalyze the further oxidation of aldehydes to carboxylic acids. Cannot use NADP(+) instead of NAD(+). The sequence is that of Alcohol dehydrogenase from Moraxella sp. (strain TAE123).